A 514-amino-acid chain; its full sequence is Membrane-bound lytic murein transglycosylase F (514 aa).

The first 30 residues, 1–30 (MKKLKINYLFIGILTLLLAAALWPSIPWFG), serve as a signal peptide directing secretion. Residues 31-269 (KTENHIAAIQ…RIEEKYLGHG (239 aa)) form a non-LT domain region. Positions 270 to 514 (DDFDYVDTRS…LFTPQKKEEK (245 aa)) are LT domain. The active site involves glutamate 314.

It in the N-terminal section; belongs to the bacterial solute-binding protein 3 family. The protein in the C-terminal section; belongs to the transglycosylase Slt family.

The protein localises to the cell outer membrane. It catalyses the reaction Exolytic cleavage of the (1-&gt;4)-beta-glycosidic linkage between N-acetylmuramic acid (MurNAc) and N-acetylglucosamine (GlcNAc) residues in peptidoglycan, from either the reducing or the non-reducing ends of the peptidoglycan chains, with concomitant formation of a 1,6-anhydrobond in the MurNAc residue.. Functionally, murein-degrading enzyme that degrades murein glycan strands and insoluble, high-molecular weight murein sacculi, with the concomitant formation of a 1,6-anhydromuramoyl product. Lytic transglycosylases (LTs) play an integral role in the metabolism of the peptidoglycan (PG) sacculus. Their lytic action creates space within the PG sacculus to allow for its expansion as well as for the insertion of various structures such as secretion systems and flagella. In Salmonella typhimurium (strain LT2 / SGSC1412 / ATCC 700720), this protein is Membrane-bound lytic murein transglycosylase F.